Consider the following 195-residue polypeptide: UMP-CMP kinase (195 aa).

Position 17 to 22 (17 to 22 (GSGKGT)) interacts with ATP. The tract at residues 37–66 (SAGDLLRQEQQSGSKDGEMIATMIKNGEIV) is NMP. A ribonucleoside 5'-phosphate is bound by residues arginine 43, 64-66 (EIV), and 91-94 (GFPR). Position 98 (asparagine 98) interacts with CMP. Residues 131–141 (KRGESSGRSDD) are LID. Arginine 132 serves as a coordination point for ATP. 2 residues coordinate a ribonucleoside 5'-phosphate: arginine 138 and arginine 149. Residue arginine 177 participates in ATP binding.

It belongs to the adenylate kinase family. UMP-CMP kinase subfamily. In terms of assembly, monomer. Mg(2+) is required as a cofactor.

It is found in the cytoplasm. It localises to the nucleus. The enzyme catalyses CMP + ATP = CDP + ADP. The catalysed reaction is dCMP + ATP = dCDP + ADP. It catalyses the reaction UMP + ATP = UDP + ADP. Its function is as follows. Catalyzes the phosphorylation of pyrimidine nucleoside monophosphates at the expense of ATP. Plays an important role in de novo pyrimidine nucleotide biosynthesis. Has preference for UMP and CMP as phosphate acceptors. The chain is UMP-CMP kinase from Dictyostelium discoideum (Social amoeba).